We begin with the raw amino-acid sequence, 493 residues long: 3-octaprenyl-4-hydroxybenzoate carboxy-lyase (493 aa).

Asparagine 172 serves as a coordination point for Mn(2+). Prenylated FMN contacts are provided by residues 175–177 (IYR), 189–191 (RWL), and 194–195 (RG). Glutamate 238 is a Mn(2+) binding site. Aspartate 287 serves as the catalytic Proton donor.

The protein belongs to the UbiD family. Homohexamer. Requires prenylated FMN as cofactor. It depends on Mn(2+) as a cofactor.

The protein resides in the cell membrane. The enzyme catalyses a 4-hydroxy-3-(all-trans-polyprenyl)benzoate + H(+) = a 2-(all-trans-polyprenyl)phenol + CO2. It participates in cofactor biosynthesis; ubiquinone biosynthesis. Functionally, catalyzes the decarboxylation of 3-octaprenyl-4-hydroxy benzoate to 2-octaprenylphenol, an intermediate step in ubiquinone biosynthesis. The sequence is that of 3-octaprenyl-4-hydroxybenzoate carboxy-lyase from Shewanella halifaxensis (strain HAW-EB4).